Here is a 25-residue protein sequence, read N- to C-terminus: GLFGVLGSIAKHVLPHVVPVIAEKL.

The residue at position 25 (leucine 25) is a Leucine amide.

Belongs to the frog skin active peptide (FSAP) family. Caerin subfamily. As to expression, expressed by the skin dorsal glands.

It localises to the secreted. Functionally, antimicrobial peptide. Adopts an alpha helical conformation which can disrupt bacterial membranes. Strongly inhibits the formation of NO by neuronal nitric oxide synthase (nNOS) at micromolar concentrations. Acts by a non-competitive mechanism, probably by binding to calcium/calmodulin and as a consequence blocking calmodulin attachment to nNOS. This Ranoidea chloris (Red-eyed tree frog) protein is Caerin-1.9.